Reading from the N-terminus, the 459-residue chain is Trigger factor (459 aa).

The PPIase FKBP-type domain occupies 166 to 245; sequence GDFANIDLTA…VNSVKAEELP (80 aa).

Belongs to the FKBP-type PPIase family. Tig subfamily.

The protein resides in the cytoplasm. It carries out the reaction [protein]-peptidylproline (omega=180) = [protein]-peptidylproline (omega=0). Its function is as follows. Involved in protein export. Acts as a chaperone by maintaining the newly synthesized protein in an open conformation. Functions as a peptidyl-prolyl cis-trans isomerase. This Bifidobacterium longum subsp. infantis (strain ATCC 15697 / DSM 20088 / JCM 1222 / NCTC 11817 / S12) protein is Trigger factor.